We begin with the raw amino-acid sequence, 232 residues long: Vesicle transport through interaction with t-SNAREs homolog 1B (232 aa).

N-acetylalanine is present on alanine 2. 2 interaction with CLINT1 regions span residues 2–23 (ATSA…GLLE) and 69–73 (APLTF). The Cytoplasmic portion of the chain corresponds to 2–208 (ATSAASSEHF…SRKVITNKLL (207 aa)). Residues 36-98 (AGTEEKKKLV…AKLHREVRST (63 aa)) adopt a coiled-coil conformation. Phosphothreonine is present on threonine 103. The residue at position 107 (arginine 107) is an Omega-N-methylarginine. The residue at position 138 (serine 138) is a Phosphoserine. A coiled-coil region spans residues 160–201 (GSEIIEELGEQRDQLERTKSRLVNTNENLSKSRKILRSMSRK). The helical; Anchor for type IV membrane protein transmembrane segment at 209-229 (LSVIIVLELAILVGLVYYKFF) threads the bilayer. Over 230 to 232 (RHH) the chain is Vesicular.

Belongs to the VTI1 family. In terms of assembly, forms a SNARE complex with STX7, STX8 and VAMP8 which functions in the homotypic fusion of late endosomes. Component of the SNARE complex composed of STX7, STX8, VAMP7 and VIT1B that is required for heterotypic fusion of late endosomes with lysosomes. May interact with STX17. Interacts with CLINT1.

The protein localises to the early endosome membrane. It is found in the late endosome membrane. Its subcellular location is the lysosome membrane. The protein resides in the cytoplasmic granule. It localises to the recycling endosome membrane. V-SNARE that mediates vesicle transport pathways through interactions with t-SNAREs on the target membrane. These interactions are proposed to mediate aspects of the specificity of vesicle trafficking and to promote fusion of the lipid bilayers. The protein is Vesicle transport through interaction with t-SNAREs homolog 1B (Vti1b) of Rattus norvegicus (Rat).